A 198-amino-acid chain; its full sequence is Imidazoleglycerol-phosphate dehydratase (198 aa).

This sequence belongs to the imidazoleglycerol-phosphate dehydratase family.

It is found in the cytoplasm. It carries out the reaction D-erythro-1-(imidazol-4-yl)glycerol 3-phosphate = 3-(imidazol-4-yl)-2-oxopropyl phosphate + H2O. Its pathway is amino-acid biosynthesis; L-histidine biosynthesis; L-histidine from 5-phospho-alpha-D-ribose 1-diphosphate: step 6/9. This is Imidazoleglycerol-phosphate dehydratase from Streptomyces griseus subsp. griseus (strain JCM 4626 / CBS 651.72 / NBRC 13350 / KCC S-0626 / ISP 5235).